The sequence spans 191 residues: Fe/S biogenesis protein NfuA (191 aa).

The [4Fe-4S] cluster site is built by C149 and C152.

This sequence belongs to the NfuA family. As to quaternary structure, homodimer. [4Fe-4S] cluster is required as a cofactor.

In terms of biological role, involved in iron-sulfur cluster biogenesis. Binds a 4Fe-4S cluster, can transfer this cluster to apoproteins, and thereby intervenes in the maturation of Fe/S proteins. Could also act as a scaffold/chaperone for damaged Fe/S proteins. The protein is Fe/S biogenesis protein NfuA of Edwardsiella ictaluri (strain 93-146).